Consider the following 415-residue polypeptide: Serine hydroxymethyltransferase (415 aa).

Residues leucine 117 and 121-123 (GHL) each bind (6S)-5,6,7,8-tetrahydrofolate. An N6-(pyridoxal phosphate)lysine modification is found at lysine 226. Residue 349-351 (SPF) participates in (6S)-5,6,7,8-tetrahydrofolate binding.

This sequence belongs to the SHMT family. As to quaternary structure, homodimer. The cofactor is pyridoxal 5'-phosphate.

Its subcellular location is the cytoplasm. The enzyme catalyses (6R)-5,10-methylene-5,6,7,8-tetrahydrofolate + glycine + H2O = (6S)-5,6,7,8-tetrahydrofolate + L-serine. Its pathway is one-carbon metabolism; tetrahydrofolate interconversion. It functions in the pathway amino-acid biosynthesis; glycine biosynthesis; glycine from L-serine: step 1/1. Functionally, catalyzes the reversible interconversion of serine and glycine with tetrahydrofolate (THF) serving as the one-carbon carrier. This reaction serves as the major source of one-carbon groups required for the biosynthesis of purines, thymidylate, methionine, and other important biomolecules. Also exhibits THF-independent aldolase activity toward beta-hydroxyamino acids, producing glycine and aldehydes, via a retro-aldol mechanism. In Geobacter sp. (strain M21), this protein is Serine hydroxymethyltransferase.